An 868-amino-acid polypeptide reads, in one-letter code: MRELVNIPLLQMLTLVAFSGTEKLPKAPVITTPLETVDALVEEVATFMCAVESYPQPEISWTRNKILIKLFDTRYSIRENGQLLTILSVEDSDDGIYCCIANNGVGGAVESCGALQVKMKPKITRPPINVKIIEGLKAVLPCTTMGNPKPSVSWIKGDNALRENSRIAVLESGSLRIHNVQKEDAGQYRCVAKNSLGTAYSKLVKLEVEVFARILRAPESHNVTFGSFVTLRCTAIGIPVPTISWIENGNAVSSGSIQESVKDRVIDSRLQLFITKPGLYTCIATNKHGEKFSTAKAAATVSIAEWSKSQKDSQGYCAQYRGEVCDAVLAKDALVFFNTSYRDPEDAQELLIHTAWNELKAVSPLCRPAAEALLCNHLFQECSPGVVPTPMPICREYCLAVKELFCAKEWQAMEGKAHRGLYRSGMHLLPVPECSKLPSMHRDPTACTRLPYLDYKKENITTFPSITSSRPSADIPNLPASTSSFAVSPAYSMTVIISIVSSFALFALLTIATLYCCRRRKEWKNKKRESTAVTLTTLPSELLLDRLHPNPMYQRMPLLLNPKLLSLEYPRNNIEYVRDIGEGAFGRVFQARAPGLLPYEPFTMVAVKMLKEEASADMQADFQREAALMAEFDNPNIVKLLGVCAVGKPMCLLFEYMAYGDLNEFLRSMSPHTVCSLSHSDLSTRARVSSPGPPPLSCAEQLCIARQVAAGMAYLSERKFVHRDLATRNCLVGETMVVKIADFGLSRNIYSADYYKADGNDAIPIRWMPPESIFYNRYTTESDVWAYGVVLWEIFSYGLQPYYGMAHEEVIYYVRDGNILACPENCPLELYNLMRLCWSKLPADRPSFCSIHRILQRMCERAEGTVGV.

Residues 1 to 21 (MRELVNIPLLQMLTLVAFSGT) form the signal peptide. The Extracellular segment spans residues 22–494 (EKLPKAPVIT…FAVSPAYSMT (473 aa)). Ig-like domains follow at residues 28-116 (PVIT…GALQ), 121-205 (PKIT…KLVK), and 212-302 (ARIL…ATVS). 3 disulfide bridges follow: Cys-49–Cys-99, Cys-98–Cys-112, and Cys-142–Cys-190. A glycan (N-linked (GlcNAc...) asparagine) is linked at Asn-222. Cystine bridges form between Cys-233–Cys-282, Cys-317–Cys-382, Cys-325–Cys-375, Cys-366–Cys-406, Cys-394–Cys-447, and Cys-398–Cys-434. The FZ domain occupies 312–450 (DSQGYCAQYR…HRDPTACTRL (139 aa)). An N-linked (GlcNAc...) asparagine glycan is attached at Asn-338. An N-linked (GlcNAc...) asparagine glycan is attached at Asn-459. The helical transmembrane segment at 495–515 (VIISIVSSFALFALLTIATLY) threads the bilayer. Residues 516–868 (CCRRRKEWKN…CERAEGTVGV (353 aa)) are Cytoplasmic-facing. Phosphotyrosine; by autocatalysis is present on Tyr-553. The Protein kinase domain occupies 574 to 855 (IEYVRDIGEG…PSFCSIHRIL (282 aa)). ATP contacts are provided by residues 580 to 588 (IGEGAFGRV) and Lys-608. Residues Ser-680 and Ser-697 each carry the phosphoserine; by CK2 modification. Asp-724 acts as the Proton acceptor in catalysis. Residue Tyr-754 is modified to Phosphotyrosine; by autocatalysis.

The protein belongs to the protein kinase superfamily. Tyr protein kinase family. As to quaternary structure, monomer. Homodimer. Interacts with LRP4; the heterodimer forms an AGRIN receptor complex that binds AGRIN resulting in activation of MUSK. Forms a heterotetramer composed of 2 DOK7 and 2 MUSK molecules which facilitates MUSK trans-autophosphorylation on tyrosine residue and activation. Interacts (via cytoplasmic part) with DOK7 (via IRS-type PTB domain); requires MUSK phosphorylation. Interacts with DVL1 (via DEP domain); the interaction is direct and mediates the formation of a DVL1, MUSK and PAK1 ternary complex involved in AChR clustering. Interacts with PDZRN3; this interaction is enhanced by agrin. Interacts with FNTA; the interaction is direct and mediates AGRIN-induced phosphorylation and activation of FNTA. Interacts with CSNK2B; mediates regulation by CK2. Interacts (via the cytoplasmic domain) with DNAJA3. Interacts with NSF; may regulate MUSK endocytosis and activity. Interacts with CAV3; may regulate MUSK signaling. Interacts with RNF31. The cofactor is Mg(2+). In terms of processing, ubiquitinated by PDZRN3. Ubiquitination promotes endocytosis and lysosomal degradation. Phosphorylated. Phosphorylation is induced by AGRIN. Autophosphorylated. Autophosphorylation at Tyr-553 is required for interaction with DOK7 which in turn stimulates the phosphorylation and the activation of MUSK. Post-translationally, neddylated. In terms of tissue distribution, expressed preferentially in skeletal muscle.

It localises to the postsynaptic cell membrane. It carries out the reaction L-tyrosyl-[protein] + ATP = O-phospho-L-tyrosyl-[protein] + ADP + H(+). Positively regulated by CK2. In terms of biological role, receptor tyrosine kinase which plays a central role in the formation and the maintenance of the neuromuscular junction (NMJ), the synapse between the motor neuron and the skeletal muscle. Recruitment of AGRIN by LRP4 to the MUSK signaling complex induces phosphorylation and activation of MUSK, the kinase of the complex. The activation of MUSK in myotubes regulates the formation of NMJs through the regulation of different processes including the specific expression of genes in subsynaptic nuclei, the reorganization of the actin cytoskeleton and the clustering of the acetylcholine receptors (AChR) in the postsynaptic membrane. May regulate AChR phosphorylation and clustering through activation of ABL1 and Src family kinases which in turn regulate MUSK. DVL1 and PAK1 that form a ternary complex with MUSK are also important for MUSK-dependent regulation of AChR clustering. May positively regulate Rho family GTPases through FNTA. Mediates the phosphorylation of FNTA which promotes prenylation, recruitment to membranes and activation of RAC1 a regulator of the actin cytoskeleton and of gene expression. Other effectors of the MUSK signaling include DNAJA3 which functions downstream of MUSK. May also play a role within the central nervous system by mediating cholinergic responses, synaptic plasticity and memory formation. This Mus musculus (Mouse) protein is Muscle, skeletal receptor tyrosine-protein kinase (Musk).